The chain runs to 709 residues: Dibasic-processing endoprotease (709 aa).

A signal peptide spans 1–22 (MHPALLCGPILAIFLQFLVSSC). 2 propeptides span residues 23 to 82 (SPLE…IRKR) and 83 to 102 (GIDA…RYKR). Topologically, residues 103–668 (DASESDELLN…QPVLEPSYRE (566 aa)) are lumenal. The 313-residue stretch at 128–440 (QWHIFNSNNP…FGKLDASKFV (313 aa)) folds into the Peptidase S8 domain. Asn-155 carries N-linked (GlcNAc...) asparagine glycosylation. Residues Asp-162 and His-200 each act as charge relay system in the active site. 2 cysteine pairs are disulfide-bonded: Cys-216–Cys-363 and Cys-308–Cys-338. Ser-371 (charge relay system) is an active-site residue. Positions 449-588 (VNPQTWLIAP…QLALWGESEN (140 aa)) constitute a P/Homo B domain. Residues Asn-463, Asn-471, and Asn-620 are each glycosylated (N-linked (GlcNAc...) asparagine). Residues 669-693 (IVAFITFFLLFAFIFVAVIWTWISA) traverse the membrane as a helical segment. Residues 694–709 (FWKAKAPPPLSQQEIA) lie on the Cytoplasmic side of the membrane.

Belongs to the peptidase S8 family. Furin subfamily. Requires Ca(2+) as cofactor. N-glycosylated.

The protein resides in the golgi apparatus. The protein localises to the trans-Golgi network membrane. Functionally, membrane-bound, subtilisin-like serine protease that processes the P-factor precursor and other precursor proteins. Essential for cell viability. Cleaves substrate on the C-terminal side of dibasic residues. The protein is Dibasic-processing endoprotease (krp1) of Schizosaccharomyces pombe (strain 972 / ATCC 24843) (Fission yeast).